Consider the following 297-residue polypeptide: Homoserine kinase (297 aa).

84 to 94 (PLSKGFGSSAA) contributes to the ATP binding site.

It belongs to the GHMP kinase family. Homoserine kinase subfamily.

It is found in the cytoplasm. It carries out the reaction L-homoserine + ATP = O-phospho-L-homoserine + ADP + H(+). The protein operates within amino-acid biosynthesis; L-threonine biosynthesis; L-threonine from L-aspartate: step 4/5. Its function is as follows. Catalyzes the ATP-dependent phosphorylation of L-homoserine to L-homoserine phosphate. This chain is Homoserine kinase, found in Shouchella clausii (strain KSM-K16) (Alkalihalobacillus clausii).